Consider the following 240-residue polypeptide: Glutathione S-transferase theta-1 (240 aa).

The 81-residue stretch at 2 to 82 folds into the GST N-terminal domain; sequence VLELYLDLLS…YLAHKYKVPD (81 aa). Glutathione contacts are provided by residues H40, 53-54, and 66-67; these read KV and ES. The GST C-terminal domain maps to 88–223; the sequence is DLQARARVDE…ILKVRDCPPA (136 aa).

Belongs to the GST superfamily. Theta family. In terms of assembly, homodimer. As to expression, in liver, highest expression found in central vein limiting plate hepatocytes. In lung, expressed mainly in club cells of the bronchiolar epithelium and, at low levels, in type II alveolar cells.

It localises to the cytoplasm. It catalyses the reaction RX + glutathione = an S-substituted glutathione + a halide anion + H(+). Conjugation of reduced glutathione to a wide number of exogenous and endogenous hydrophobic electrophiles. Also binds steroids, bilirubin, carcinogens and numerous organic anions. Has dichloromethane dehalogenase activity. This chain is Glutathione S-transferase theta-1 (Gstt1), found in Rattus norvegicus (Rat).